A 393-amino-acid polypeptide reads, in one-letter code: NAD(P)H-quinone oxidoreductase subunit H, chloroplastic (393 aa).

The protein belongs to the complex I 49 kDa subunit family. NDH is composed of at least 16 different subunits, 5 of which are encoded in the nucleus.

Its subcellular location is the plastid. It localises to the chloroplast thylakoid membrane. The enzyme catalyses a plastoquinone + NADH + (n+1) H(+)(in) = a plastoquinol + NAD(+) + n H(+)(out). It carries out the reaction a plastoquinone + NADPH + (n+1) H(+)(in) = a plastoquinol + NADP(+) + n H(+)(out). In terms of biological role, NDH shuttles electrons from NAD(P)H:plastoquinone, via FMN and iron-sulfur (Fe-S) centers, to quinones in the photosynthetic chain and possibly in a chloroplast respiratory chain. The immediate electron acceptor for the enzyme in this species is believed to be plastoquinone. Couples the redox reaction to proton translocation, and thus conserves the redox energy in a proton gradient. The protein is NAD(P)H-quinone oxidoreductase subunit H, chloroplastic of Helianthus annuus (Common sunflower).